A 414-amino-acid polypeptide reads, in one-letter code: Patatin-like protein 1 (414 aa).

Residues 20 to 224 form the PNPLA domain; it reads LAIDGGGIRG…AANNPTMVAM (205 aa). The GXGXXG signature appears at 24–29; sequence GGGIRG. Residues 62 to 66 carry the GXSXG motif; it reads GTSTG. Ser64 serves as the catalytic Nucleophile. Asp211 functions as the Proton acceptor in the catalytic mechanism. The DGA/G motif lies at 211-213; it reads DGG.

It belongs to the patatin family.

Functionally, possesses non-specific lipolytic acyl hydrolase (LAH) activity. Hydrolyzes phospholipids as well as galactolipids. May play a role in disease resistance. In Oryza sativa subsp. indica (Rice), this protein is Patatin-like protein 1 (PLP1).